Here is an 894-residue protein sequence, read N- to C-terminus: Microsomal triglyceride transfer protein large subunit (894 aa).

Residues 1 to 18 form the signal peptide; it reads MILLAVLFLCFISSYSAS. The Vitellogenin domain maps to 28-659; it reads LNNDRLYKLT…IFQYIGKAGL (632 aa). Cysteine 174 and cysteine 194 are joined by a disulfide.

In terms of assembly, heterodimer; heterodimerizes with the protein disulfide isomerase (P4HB/PDI). Interacts with APOB. Interacts with PRAP1. As to expression, liver and small intestine. Also found in ovary, testis and kidney.

Its subcellular location is the endoplasmic reticulum. The protein resides in the golgi apparatus. The enzyme catalyses a 1,2-diacyl-sn-glycero-3-phosphocholine(in) = a 1,2-diacyl-sn-glycero-3-phosphocholine(out). The catalysed reaction is a 1,2-diacyl-sn-glycero-3-phosphoethanolamine(in) = a 1,2-diacyl-sn-glycero-3-phosphoethanolamine(out). It catalyses the reaction a cholesterol ester(in) = a cholesterol ester(out). It carries out the reaction a triacyl-sn-glycerol(in) = a triacyl-sn-glycerol(out). Catalyzes the transport of triglyceride, cholesteryl ester, and phospholipid between phospholipid surfaces. Required for the assembly and secretion of plasma lipoproteins that contain apolipoprotein B. May be involved in regulating cholesteryl ester biosynthesis in cells that produce lipoproteins. In Homo sapiens (Human), this protein is Microsomal triglyceride transfer protein large subunit (MTTP).